We begin with the raw amino-acid sequence, 818 residues long: Beta-glucosidase (818 aa).

Residue aspartate 222 is part of the active site. Positions 386-538 (VFSGEMTVEY…GDAGIAEAVE (153 aa)) constitute a PA14 domain.

This sequence belongs to the glycosyl hydrolase 3 family.

The protein resides in the cytoplasm. It carries out the reaction Hydrolysis of terminal, non-reducing beta-D-glucosyl residues with release of beta-D-glucose.. In terms of biological role, involved in modifying a vir-inducing plant signal molecule. Hydrolyzes coniferin but not cellobiose. The polypeptide is Beta-glucosidase (cbg-1) (Rhizobium radiobacter (Agrobacterium tumefaciens)).